Consider the following 216-residue polypeptide: Small ribosomal subunit protein uS3c (216 aa).

The KH type-2 domain occupies 43 to 115 (FENDWGTLYN…QTRIKVIQVN (73 aa)).

This sequence belongs to the universal ribosomal protein uS3 family. Part of the 30S ribosomal subunit.

It is found in the plastid. The protein localises to the chloroplast. This is Small ribosomal subunit protein uS3c (rps3) from Emiliania huxleyi (Coccolithophore).